Here is a 439-residue protein sequence, read N- to C-terminus: Protein CNPPD1 (439 aa).

Residues 231–251 form a helical membrane-spanning segment; that stretch reads CLLGVVYLTGFAAVFTSIAVV. The interval 283 to 302 is disordered; that stretch reads ALAPEQPQPKLPDVSPPSST.

This sequence belongs to the CNPPD1 family.

It localises to the membrane. The polypeptide is Protein CNPPD1 (CNPPD1) (Gallus gallus (Chicken)).